A 105-amino-acid polypeptide reads, in one-letter code: uncharacterized protein (105 aa).

A helical transmembrane segment spans residues 8–28; the sequence is FMTAGIIIALIIAVLAPFLAS. Positions 32–53 are disordered; sequence DGLESTAEKVMPNPETEPVLES. Residues 72-92 form a helical membrane-spanning segment; that stretch reads VSMVIGTILVLAIAYGVGAVF.

To M.jannaschii MJ1570.

Its subcellular location is the cell membrane. This is an uncharacterized protein from Methanothermobacter thermautotrophicus (strain ATCC 29096 / DSM 1053 / JCM 10044 / NBRC 100330 / Delta H) (Methanobacterium thermoautotrophicum).